We begin with the raw amino-acid sequence, 342 residues long: Protein-glutamate methylesterase/protein-glutamine glutaminase 3 (342 aa).

A Response regulatory domain is found at 3–120 (RVLVVEDMPT…SPGFADDARR (118 aa)). A 4-aspartylphosphate modification is found at D54. One can recognise a CheB-type methylesterase domain in the interval 152-342 (DVPRGRVVAV…ADRLALWLRR (191 aa)). Active-site residues include S164, H191, and D285.

Belongs to the CheB family. In terms of processing, phosphorylated by CheA. Phosphorylation of the N-terminal regulatory domain activates the methylesterase activity.

It is found in the cytoplasm. It carries out the reaction [protein]-L-glutamate 5-O-methyl ester + H2O = L-glutamyl-[protein] + methanol + H(+). The enzyme catalyses L-glutaminyl-[protein] + H2O = L-glutamyl-[protein] + NH4(+). Involved in chemotaxis. Part of a chemotaxis signal transduction system that modulates chemotaxis in response to various stimuli. Catalyzes the demethylation of specific methylglutamate residues introduced into the chemoreceptors (methyl-accepting chemotaxis proteins or MCP) by CheR. Also mediates the irreversible deamidation of specific glutamine residues to glutamic acid. This chain is Protein-glutamate methylesterase/protein-glutamine glutaminase 3, found in Anaeromyxobacter dehalogenans (strain 2CP-C).